Reading from the N-terminus, the 460-residue chain is Phosphomethylpyrimidine synthase (460 aa).

Substrate is bound by residues Asn-80, Met-109, Tyr-139, His-175, 195 to 197, 236 to 239, and Glu-275; these read SRG and DSLR. Position 279 (His-279) interacts with Zn(2+). Tyr-302 serves as a coordination point for substrate. His-343 contributes to the Zn(2+) binding site. The [4Fe-4S] cluster site is built by Cys-423, Cys-426, and Cys-431.

It belongs to the ThiC family. [4Fe-4S] cluster is required as a cofactor.

It carries out the reaction 5-amino-1-(5-phospho-beta-D-ribosyl)imidazole + S-adenosyl-L-methionine = 4-amino-2-methyl-5-(phosphooxymethyl)pyrimidine + CO + 5'-deoxyadenosine + formate + L-methionine + 3 H(+). Its pathway is cofactor biosynthesis; thiamine diphosphate biosynthesis. Catalyzes the synthesis of the hydroxymethylpyrimidine phosphate (HMP-P) moiety of thiamine from aminoimidazole ribotide (AIR) in a radical S-adenosyl-L-methionine (SAM)-dependent reaction. In Microcystis aeruginosa (strain NIES-843 / IAM M-2473), this protein is Phosphomethylpyrimidine synthase.